Consider the following 678-residue polypeptide: Putative cyclic nucleotide-gated ion channel 15 (678 aa).

The Cytoplasmic portion of the chain corresponds to 1–81 (MGYGNSRSVR…RGQTIRRWNK (81 aa)). A helical transmembrane segment spans residues 82–102 (IFLIACLVSLFVDPLFFFLPV). The Extracellular portion of the chain corresponds to 103-115 (MRNEACITIGVRL). Residues 116–136 (EVVLTLIRSLADAFYIAQILI) traverse the membrane as a helical segment. At 137–170 (RFRTAYIAPPSRVFGRGELVIDSRKIAWRYLHKS) the chain is on the cytoplasmic side. Residues 171-191 (FWIHLVAALPLPQVLIWIIIP) form a helical membrane-spanning segment. Topologically, residues 192 to 203 (NLRGSPMTNTKN) are extracellular. A helical transmembrane segment spans residues 204–224 (VLRFIIIFQYVPRMFLIFPLS). The Cytoplasmic segment spans residues 225–245 (RQIIKATGVVTETAWAGAAYN). A helical membrane pass occupies residues 246–266 (LMLYMLASHVLGACWYLLAVE). The Extracellular segment spans residues 267-364 (RQEACWRHAC…GQNLATSTYA (98 aa)). Residues 365 to 385 (GEILFAIIIATLGLVLFALLI) traverse the membrane as a helical segment. The Cytoplasmic portion of the chain corresponds to 386–678 (GNMQTYLQST…KPVEPDFSSE (293 aa)). Residues 471–595 (LFDQ…TKQL) and Glu542 each bind a nucleoside 3',5'-cyclic phosphate. A calmodulin-binding region spans residues 587-602 (FRRLHTKQLRHKFRFY). Residues 607–638 (RTWAACFIQAAWRRHRKRKYKTELRAKEEFHY) enclose the IQ domain. Over residues 656-668 (RSGSDSGMMSSIQ) the composition is skewed to polar residues. The segment at 656–678 (RSGSDSGMMSSIQKPVEPDFSSE) is disordered.

Belongs to the cyclic nucleotide-gated cation channel (TC 1.A.1.5) family. Homotetramer or heterotetramer.

It localises to the cell membrane. Functionally, putative cyclic nucleotide-gated ion channel. The sequence is that of Putative cyclic nucleotide-gated ion channel 15 (CNGC15) from Arabidopsis thaliana (Mouse-ear cress).